Here is a 164-residue protein sequence, read N- to C-terminus: Phosphopantetheine adenylyltransferase (164 aa).

Thr14 is a binding site for substrate. ATP-binding positions include 14–15 (TF) and His22. Substrate-binding residues include Lys46, Met78, and Arg92. Residues 93 to 95 (GLR), Glu103, and 128 to 134 (HAFISST) contribute to the ATP site.

It belongs to the bacterial CoaD family. Homohexamer. It depends on Mg(2+) as a cofactor.

Its subcellular location is the cytoplasm. It carries out the reaction (R)-4'-phosphopantetheine + ATP + H(+) = 3'-dephospho-CoA + diphosphate. The protein operates within cofactor biosynthesis; coenzyme A biosynthesis; CoA from (R)-pantothenate: step 4/5. Its function is as follows. Reversibly transfers an adenylyl group from ATP to 4'-phosphopantetheine, yielding dephospho-CoA (dPCoA) and pyrophosphate. In Vibrio vulnificus (strain CMCP6), this protein is Phosphopantetheine adenylyltransferase.